The primary structure comprises 106 residues: ATP-dependent Clp protease adapter protein ClpS (106 aa).

Residues Met-1 to Leu-13 show a composition bias toward polar residues. The tract at residues Met-1–Lys-21 is disordered.

Belongs to the ClpS family. As to quaternary structure, binds to the N-terminal domain of the chaperone ClpA.

Involved in the modulation of the specificity of the ClpAP-mediated ATP-dependent protein degradation. In Pectobacterium carotovorum subsp. carotovorum (strain PC1), this protein is ATP-dependent Clp protease adapter protein ClpS.